The sequence spans 133 residues: Small ribosomal subunit protein eS24 (133 aa).

N-acetylmethionine is present on Met-1. At Thr-9 the chain carries Phosphothreonine. A Glycyl lysine isopeptide (Lys-Gly) (interchain with G-Cter in SUMO2) cross-link involves residue Lys-37. A disordered region spans residues Ala-92–Glu-133. The span at Lys-101–Gly-119 shows a compositional bias: basic residues.

This sequence belongs to the eukaryotic ribosomal protein eS24 family. As to quaternary structure, component of the small ribosomal subunit. Part of the small subunit (SSU) processome, composed of more than 70 proteins and the RNA chaperone small nucleolar RNA (snoRNA) U3.

The protein resides in the cytoplasm. It is found in the nucleus. The protein localises to the nucleolus. Component of the small ribosomal subunit. The ribosome is a large ribonucleoprotein complex responsible for the synthesis of proteins in the cell. Required for processing of pre-rRNA and maturation of 40S ribosomal subunits. Part of the small subunit (SSU) processome, first precursor of the small eukaryotic ribosomal subunit. During the assembly of the SSU processome in the nucleolus, many ribosome biogenesis factors, an RNA chaperone and ribosomal proteins associate with the nascent pre-rRNA and work in concert to generate RNA folding, modifications, rearrangements and cleavage as well as targeted degradation of pre-ribosomal RNA by the RNA exosome. This chain is Small ribosomal subunit protein eS24 (RPS24), found in Oryctolagus cuniculus (Rabbit).